The following is a 130-amino-acid chain: Small ribosomal subunit protein uS11 (130 aa).

This sequence belongs to the universal ribosomal protein uS11 family. Part of the 30S ribosomal subunit. Interacts with proteins S7 and S18. Binds to IF-3.

Functionally, located on the platform of the 30S subunit, it bridges several disparate RNA helices of the 16S rRNA. Forms part of the Shine-Dalgarno cleft in the 70S ribosome. This is Small ribosomal subunit protein uS11 from Buchnera aphidicola subsp. Cinara cedri (strain Cc).